Reading from the N-terminus, the 661-residue chain is UvrABC system protein B (661 aa).

Positions 28–414 (KGVKEGKRHQ…HTDEMIEQII (387 aa)) constitute a Helicase ATP-binding domain. Position 41–48 (41–48 (GATGTGKT)) interacts with ATP. A Beta-hairpin motif is present at residues 94 to 117 (YYDYYQPEAYVPSTDTFIEKDASI). The region spanning 432–598 (QIDDLLSEIQ…TINKKIHDVI (167 aa)) is the Helicase C-terminal domain. The disordered stretch occupies residues 604-625 (NDETNEKQQTELPKKMTKKERQ). Residues 607 to 617 (TNEKQQTELPK) are compositionally biased toward basic and acidic residues. A UVR domain is found at 625 to 660 (QKTIENIEKEMKKAAKDLDFEKATELRDMLFELKSE).

Belongs to the UvrB family. As to quaternary structure, forms a heterotetramer with UvrA during the search for lesions. Interacts with UvrC in an incision complex.

It localises to the cytoplasm. In terms of biological role, the UvrABC repair system catalyzes the recognition and processing of DNA lesions. A damage recognition complex composed of 2 UvrA and 2 UvrB subunits scans DNA for abnormalities. Upon binding of the UvrA(2)B(2) complex to a putative damaged site, the DNA wraps around one UvrB monomer. DNA wrap is dependent on ATP binding by UvrB and probably causes local melting of the DNA helix, facilitating insertion of UvrB beta-hairpin between the DNA strands. Then UvrB probes one DNA strand for the presence of a lesion. If a lesion is found the UvrA subunits dissociate and the UvrB-DNA preincision complex is formed. This complex is subsequently bound by UvrC and the second UvrB is released. If no lesion is found, the DNA wraps around the other UvrB subunit that will check the other stand for damage. The sequence is that of UvrABC system protein B from Staphylococcus haemolyticus (strain JCSC1435).